The chain runs to 332 residues: Melanocortin receptor 4 (332 aa).

Residues 1 to 43 lie on the Extracellular side of the membrane; that stretch reads MVNSTHRGMHASLHLWNRSSHRLHSNASESLGKGYSDGGCYEQ. N-linked (GlcNAc...) asparagine glycosylation is found at Asn-3, Asn-17, and Asn-26. 2 cysteine pairs are disulfide-bonded: Cys-40-Cys-279 and Cys-271-Cys-277. The helical transmembrane segment at 44–69 threads the bilayer; it reads LFVSPEVFVTLGVISLLENILVIVAI. The Cytoplasmic segment spans residues 70–81; sequence AKNKNLHSPMYF. Residues 82–106 form a helical membrane-spanning segment; sequence FICSLAVADMLVSVSNGSETIVITL. 3 residues coordinate Ca(2+): Glu-100, Asp-122, and Asp-126. The Extracellular segment spans residues 107–123; it reads LNSTDTDTQSFTVNIDN. The helical transmembrane segment at 124–145 threads the bilayer; it reads VIDSVICSSLLASICSLLSIAV. At 146-165 the chain is on the cytoplasmic side; it reads DRYFTIFYALQYHNIMTVKR. The helical transmembrane segment at 166–186 threads the bilayer; the sequence is VRIIISCIWAACTVSGILFII. Residues 187–191 are Extracellular-facing; it reads YSDSS. The chain crosses the membrane as a helical span at residues 192–215; sequence AVIICLITMFFTMLALMASLYVHM. The Cytoplasmic segment spans residues 216–248; the sequence is FLMARLHIKRIAVLPGTGAIRQGANMKGAITLT. Residues 249 to 271 form a helical membrane-spanning segment; sequence ILIGVFVVCWAPFFLHLIFYISC. The Extracellular segment spans residues 272–280; it reads PQNPYCVCF. Residues 281–304 traverse the membrane as a helical segment; sequence MSHFNLYLILIMCNSVIDPLIYAL. Topologically, residues 305-332 are cytoplasmic; sequence RSQELRKTFKEIICCYPLGGLCDLSSRY. Cys-318 is lipidated: S-palmitoyl cysteine.

It belongs to the G-protein coupled receptor 1 family. Homodimer; disulfide-linked, also forms higher order oligomers. Interacts with GNAS. Interacts with ATRNL1. Interacts with MGRN1; this interaction competes with GNAS-binding and thus inhibits agonist-induced cAMP production. Interacts with MRAP and MRAP2; these associated factors increase ligand-sensitivity and generation of cAMP.

It localises to the cell membrane. Its function is as follows. Hormone receptor that acts as a key component of the leptin-melanocortin pathway at the intersection of homeostatic maintenance of energetic state. Plays a role in regulating food intake: activation by a stimulating hormone such as anorexigenic alpha-melanocyte stimulating hormone (alpha-MSH) inhibits appetite, whereas binding to a natural antagonist like Agouti-related protein/AGRP promotes appetite. G-protein-coupled receptor that activates conventional Galphas signaling leading to induction of anorexogenic signaling in the hypothalamus to result in negative energy balance. Regulates the firing activity of neurons from the hypothalamus by alpha-MSH and AGRP independently of Galphas signaling by ligand-induced coupling of closure of inwardly rectifying potassium channel KCNJ13. In intestinal epithelial cells, plays a role in the inhibition of hepatic glucose production via nesfatin-1/NUCB2 leading to increased cyclic adenosine monophosphate (cAMP) levels and glucagon-like peptide 1 (GLP-1) secretion in the intestinal epithelium. The polypeptide is Melanocortin receptor 4 (MC4R) (Macaca fascicularis (Crab-eating macaque)).